Consider the following 140-residue polypeptide: uncharacterized protein (140 aa).

Residues isoleucine 26–leucine 80 form the HTH cro/C1-type domain. Positions methionine 37–arginine 56 form a DNA-binding region, H-T-H motif.

This is an uncharacterized protein from Mycobacterium tuberculosis (strain ATCC 25618 / H37Rv).